Consider the following 71-residue polypeptide: DNA-directed RNA polymerase subunit omega (71 aa).

The protein belongs to the RNA polymerase subunit omega family. As to quaternary structure, the RNAP catalytic core consists of 2 alpha, 1 beta, 1 beta' and 1 omega subunit. When a sigma factor is associated with the core the holoenzyme is formed, which can initiate transcription.

The enzyme catalyses RNA(n) + a ribonucleoside 5'-triphosphate = RNA(n+1) + diphosphate. In terms of biological role, promotes RNA polymerase assembly. Latches the N- and C-terminal regions of the beta' subunit thereby facilitating its interaction with the beta and alpha subunits. The polypeptide is DNA-directed RNA polymerase subunit omega (Campylobacter concisus (strain 13826)).